Reading from the N-terminus, the 1102-residue chain is WASH complex subunit 4 (1102 aa).

Belongs to the SWIP family. Component of the WASH complex.

Its subcellular location is the early endosome. Functionally, acts at least in part as component of the WASH complex which may regulate wash nucleation-promoting factor (NPF) activity and is required for its membrane targeting during endosomal sorting. During embryogenesis, not involved in the wash-dependent developmental migration of hemocytes anteriorly from the tail. This chain is WASH complex subunit 4, found in Drosophila melanogaster (Fruit fly).